We begin with the raw amino-acid sequence, 879 residues long: DNA mismatch repair protein MutS (879 aa).

639–646 (GPNMGGKS) contributes to the ATP binding site.

The protein belongs to the DNA mismatch repair MutS family.

In terms of biological role, this protein is involved in the repair of mismatches in DNA. It is possible that it carries out the mismatch recognition step. This protein has a weak ATPase activity. The sequence is that of DNA mismatch repair protein MutS from Aromatoleum aromaticum (strain DSM 19018 / LMG 30748 / EbN1) (Azoarcus sp. (strain EbN1)).